A 529-amino-acid polypeptide reads, in one-letter code: Tyrosine-protein kinase Fgr (529 aa).

Gly-2 carries the N-myristoyl glycine lipid modification. 2 S-palmitoyl cysteine lipidation sites follow: Cys-3 and Cys-6. At Tyr-34 the chain carries Phosphotyrosine. An SH3 domain is found at 77–138 (IGVTLFIALY…PSNYVAPVDS (62 aa)). The SH2 domain maps to 144–241 (WYFGKIGRKD…GLCNLLIAPC (98 aa)). Residue Tyr-208 is modified to Phosphotyrosine. At Ser-218 the chain carries Phosphoserine. Residues 263 to 516 (ITLERRLGTG…YLQSFLEDYF (254 aa)) enclose the Protein kinase domain. Residues 269 to 277 (LGTGCFGDV) and Lys-291 each bind ATP. Asp-382 serves as the catalytic Proton acceptor. Tyr-412 carries the phosphotyrosine modification. Tyr-523 bears the Phosphotyrosine; by SRC mark.

Belongs to the protein kinase superfamily. Tyr protein kinase family. SRC subfamily. As to quaternary structure, interacts with ITGB1, ITGB2, MS4A2/FCER1B, FCER1G, FCGR2A and/or FCGR2B. Interacts (via SH2 domain) with SYK (tyrosine phosphorylated). Interacts (via SH2 domain) with FLT3 (tyrosine phosphorylated). Interacts with PTK2/FAK1. Interacts (via SH2 domain) with HCLS1 (tyrosine phosphorylated by SYK). Interacts with SIRPA and PTPNS1. Interacts (not phosphorylated on tyrosine residues) with CBL; FGR tyrosine phosphorylation promotes dissociation. Interacts with PIK3R1 and FASLG. Interacts with CLNK. In terms of processing, ubiquitinated. Becomes ubiquitinated in response to ITGB2 signaling; this does not lead to degradation. Post-translationally, phosphorylated. Autophosphorylated on tyrosine residues. Becomes phosphorylated in response to FCGR2A and/or FCGR2B engagement, cell adhesion and signaling by ITGB2. Prior phosphorylation at Tyr-523 by SRC inhibits ulterior autophosphorylation at Tyr-412. In terms of tissue distribution, detected in neutrophils, monocytes and natural killer cells (at protein level). Detected in monocytes and large lymphocytes.

It localises to the cell membrane. The protein localises to the cell projection. Its subcellular location is the ruffle membrane. The protein resides in the cytoplasm. It is found in the cytosol. It localises to the cytoskeleton. The protein localises to the mitochondrion inner membrane. Its subcellular location is the mitochondrion intermembrane space. The enzyme catalyses L-tyrosyl-[protein] + ATP = O-phospho-L-tyrosyl-[protein] + ADP + H(+). Its activity is regulated as follows. Activated by autophosphorylation. Prior phosphorylation at Tyr-523 by SRC inhibits ulterior autophosphorylation at Tyr-412. Activated by phorbol myristate acetate, phosphatidic acid and poly-Lys. Binding (via SH2 domain) of HCLS1 that is already phosphorylated by SYK strongly increases kinase activity. Its function is as follows. Non-receptor tyrosine-protein kinase that transmits signals from cell surface receptors devoid of kinase activity and contributes to the regulation of immune responses, including neutrophil, monocyte, macrophage and mast cell functions, cytoskeleton remodeling in response to extracellular stimuli, phagocytosis, cell adhesion and migration. Promotes mast cell degranulation, release of inflammatory cytokines and IgE-mediated anaphylaxis. Acts downstream of receptors that bind the Fc region of immunoglobulins, such as MS4A2/FCER1B, FCGR2A and/or FCGR2B. Acts downstream of ITGB1 and ITGB2, and regulates actin cytoskeleton reorganization, cell spreading and adhesion. Depending on the context, activates or inhibits cellular responses. Functions as a negative regulator of ITGB2 signaling, phagocytosis and SYK activity in monocytes. Required for normal ITGB1 and ITGB2 signaling, normal cell spreading and adhesion in neutrophils and macrophages. Functions as a positive regulator of cell migration and regulates cytoskeleton reorganization via RAC1 activation. Phosphorylates SYK (in vitro) and promotes SYK-dependent activation of AKT1 and MAP kinase signaling. Phosphorylates PLD2 in antigen-stimulated mast cells, leading to PLD2 activation and the production of the signaling molecules lysophosphatidic acid and diacylglycerol. Promotes activation of PIK3R1. Phosphorylates FASLG, and thereby regulates its ubiquitination and subsequent internalization. Phosphorylates ABL1. Promotes phosphorylation of CBL, CTTN, PIK3R1, PTK2/FAK1, PTK2B/PYK2 and VAV2. Phosphorylates HCLS1 that has already been phosphorylated by SYK, but not unphosphorylated HCLS1. Together with CLNK, it acts as a negative regulator of natural killer cell-activating receptors and inhibits interferon-gamma production. This is Tyrosine-protein kinase Fgr (FGR) from Homo sapiens (Human).